The chain runs to 93 residues: Cell division topological specificity factor (93 aa).

The protein belongs to the MinE family.

Functionally, prevents the cell division inhibition by proteins MinC and MinD at internal division sites while permitting inhibition at polar sites. This ensures cell division at the proper site by restricting the formation of a division septum at the midpoint of the long axis of the cell. The protein is Cell division topological specificity factor of Agathobacter rectalis (strain ATCC 33656 / DSM 3377 / JCM 17463 / KCTC 5835 / VPI 0990) (Eubacterium rectale).